Reading from the N-terminus, the 64-residue chain is UPF0370 protein YE1145 (64 aa).

Residues 3–23 (WLADYWWVVLIILVGMILNGI) traverse the membrane as a helical segment. Residues 36-64 (SNKPEIPPHRDNNAQWDDDDDWPDKDKKK) are disordered.

The protein belongs to the UPF0370 family.

It localises to the cell membrane. This Yersinia enterocolitica serotype O:8 / biotype 1B (strain NCTC 13174 / 8081) protein is UPF0370 protein YE1145.